The following is a 540-amino-acid chain: CBL-interacting protein kinase 12 (540 aa).

Positions 1 to 23 (MLMATVSPARREPTPQAVRASPM) are disordered. Residues 46–300 (YELGRVLGQG…VPEIIESDWF (255 aa)) enclose the Protein kinase domain. ATP contacts are provided by residues 52–60 (LGQGSFAKV) and lysine 75. The Proton acceptor role is filled by aspartate 168. Residues 186–215 (DFGLAAGPDQFDPDGLLHTFCGTPAYVAPE) form an activation loop region. The segment covering 333-348 (PPPLGLAPPVPPPPQG) has biased composition (pro residues). Residues 333 to 380 (PPPLGLAPPVPPPPQGDDPDGSGSESDSSVVSCPATLSTGESQRVRGS) form a disordered region. Over residues 353-364 (GSGSESDSSVVS) the composition is skewed to low complexity. The 37-residue stretch at 370-406 (STGESQRVRGSLPRPASLNAFDIISFSKGFNLSGLFE) folds into the NAF domain. Residues 409 to 438 (GNEIRFVSGEPMSDIVKKLEEIAKVKSFTV) are PPI.

The protein belongs to the protein kinase superfamily. CAMK Ser/Thr protein kinase family. SNF1 subfamily. The cofactor is Mg(2+). Autophosphorylated. Expressed at low levels in leaf blades.

The enzyme catalyses L-seryl-[protein] + ATP = O-phospho-L-seryl-[protein] + ADP + H(+). It carries out the reaction L-threonyl-[protein] + ATP = O-phospho-L-threonyl-[protein] + ADP + H(+). Involved in drought stress tolerance. CIPK serine-threonine protein kinases interact with CBL proteins. Binding of a CBL protein to the regulatory NAF domain of CIPK protein lead to the activation of the kinase in a calcium-dependent manner. The polypeptide is CBL-interacting protein kinase 12 (CIPK12) (Oryza sativa subsp. japonica (Rice)).